We begin with the raw amino-acid sequence, 101 residues long: Small ribosomal subunit protein uS14 (101 aa).

The protein belongs to the universal ribosomal protein uS14 family. As to quaternary structure, part of the 30S ribosomal subunit. Contacts proteins S3 and S10.

In terms of biological role, binds 16S rRNA, required for the assembly of 30S particles and may also be responsible for determining the conformation of the 16S rRNA at the A site. The polypeptide is Small ribosomal subunit protein uS14 (Methylococcus capsulatus (strain ATCC 33009 / NCIMB 11132 / Bath)).